The sequence spans 293 residues: Ribosomal protein L11 methyltransferase (293 aa).

The S-adenosyl-L-methionine site is built by T145, G166, D188, and N230.

The protein belongs to the methyltransferase superfamily. PrmA family.

It localises to the cytoplasm. It carries out the reaction L-lysyl-[protein] + 3 S-adenosyl-L-methionine = N(6),N(6),N(6)-trimethyl-L-lysyl-[protein] + 3 S-adenosyl-L-homocysteine + 3 H(+). Functionally, methylates ribosomal protein L11. This Mannheimia succiniciproducens (strain KCTC 0769BP / MBEL55E) protein is Ribosomal protein L11 methyltransferase.